Consider the following 333-residue polypeptide: Ribosomal protein L11 methyltransferase (333 aa).

S-adenosyl-L-methionine is bound by residues Thr181, Gly202, Asp224, and Asn268.

This sequence belongs to the methyltransferase superfamily. PrmA family.

It localises to the cytoplasm. The enzyme catalyses L-lysyl-[protein] + 3 S-adenosyl-L-methionine = N(6),N(6),N(6)-trimethyl-L-lysyl-[protein] + 3 S-adenosyl-L-homocysteine + 3 H(+). In terms of biological role, methylates ribosomal protein L11. This is Ribosomal protein L11 methyltransferase from Helicobacter pylori (strain ATCC 700392 / 26695) (Campylobacter pylori).